The sequence spans 432 residues: Mannan endo-1,4-beta-mannosidase 1 (432 aa).

The N-terminal stretch at 1 to 28 (MRLLGAHRAALLVLACVVVVVIHGLGEA) is a signal peptide. Substrate-binding residues include Trp-93 and Asn-209. Glu-210 serves as the catalytic Proton donor. A substrate-binding site is contributed by Tyr-289. Glu-329 acts as the Nucleophile in catalysis. Trp-371 is a binding site for substrate.

It belongs to the glycosyl hydrolase 5 (cellulase A) family. As to expression, ubiquitous.

It is found in the secreted. It carries out the reaction Random hydrolysis of (1-&gt;4)-beta-D-mannosidic linkages in mannans, galactomannans and glucomannans.. The polypeptide is Mannan endo-1,4-beta-mannosidase 1 (MAN1) (Oryza sativa subsp. japonica (Rice)).